The primary structure comprises 452 residues: GPI mannosyltransferase 2 (452 aa).

The Cytoplasmic segment spans residues 1–7; it reads MMEKVTK. Residues 8–28 traverse the membrane as a helical segment; that stretch reads LALTSRVMVLVVQLLANFATP. Topologically, residues 29–113 are lumenal; the sequence is DHKPDVFRMP…HLGIPLSRDA (85 aa). The chain crosses the membrane as a helical span at residues 114-134; it reads LILLVAVALNVLIFCKTANVL. Topologically, residues 135–161 are cytoplasmic; the sequence is YKLTQRMFNDHNKSWNAALIFCFNPAS. The chain crosses the membrane as a helical span at residues 162-182; that stretch reads IFFSAAYSETFFAFASFSLML. The Lumenal segment spans residues 183 to 209; sequence ECMRSEKDFRTFRLGAALTGCFVCRSN. Residues 210 to 230 form a helical membrane-spanning segment; sequence GLLTLGFPLYFLARHILLSTG. Topologically, residues 231 to 238 are cytoplasmic; sequence SVQRCWQL. Residues 239–259 traverse the membrane as a helical segment; that stretch reads FKMGLAMLVALGILHTYYFYI. Topologically, residues 260-284 are lumenal; the sequence is YRLYCLPDVKVQHAQHVVDYAKERS. A helical transmembrane segment spans residues 285–305; the sequence is FLISGQASVGSPWCGYTLPFP. The Cytoplasmic segment spans residues 306-327; that stretch reads YTYVQSHYWDVGFLRYYKWKQL. Residues 328–348 form a helical membrane-spanning segment; the sequence is PNFLLALPMLLFMHWHCYDYI. Residues 349–370 lie on the Lumenal side of the membrane; sequence RKLVANTWSKISPSEYQGILKE. A helical transmembrane segment spans residues 371–391; that stretch reads HISFPFVLHAAVLTLVCTLYV. At 392-398 the chain is on the cytoplasmic side; sequence HIQVSTR. The helical transmembrane segment at 399 to 419 threads the bilayer; the sequence is LLASATPVFYWFAADYMPNTF. Topologically, residues 420 to 426 are lumenal; the sequence is QLSFRSK. Residues 427–447 form a helical membrane-spanning segment; that stretch reads AGVLFIWCLTYSLVGTVLFSN. At 448–452 the chain is on the cytoplasmic side; it reads NYPWT.

Belongs to the PIGV family.

The protein localises to the endoplasmic reticulum membrane. The protein operates within glycolipid biosynthesis; glycosylphosphatidylinositol-anchor biosynthesis. Mannosyltransferase involved in glycosylphosphatidylinositol-anchor biosynthesis. Transfers the second mannose to the glycosylphosphatidylinositol during GPI precursor assembly. Required for the GPI-mediated endoplasmic reticulum exit and proper targeting to the cell surface of chp. Required for GPI-mediated membrane attachment of chp, qsm and Cont. Essential for microvillar stability in the rhabdomere. This is GPI mannosyltransferase 2 from Drosophila pseudoobscura pseudoobscura (Fruit fly).